The following is a 198-amino-acid chain: Recombination protein RecR (198 aa).

The segment at 57–72 (CSECGHITEQDPCYIC) adopts a C4-type zinc-finger fold. The Toprim domain maps to 80-175 (SVICVVEDDK…TVTRLAQGLS (96 aa)).

The protein belongs to the RecR family.

Functionally, may play a role in DNA repair. It seems to be involved in an RecBC-independent recombinational process of DNA repair. It may act with RecF and RecO. This is Recombination protein RecR from Staphylococcus saprophyticus subsp. saprophyticus (strain ATCC 15305 / DSM 20229 / NCIMB 8711 / NCTC 7292 / S-41).